Consider the following 136-residue polypeptide: MARTKQTARKSHGGKAPRTLLATKAARKSAPTTGGVKKPHRYRPGTVALREIRKYQKSTELLIRKLPFQRLVREIAQDYKTDLRFQSHAVLALQEAAEAYLVGLFEDTNLCAIHAKRVTIMPKDVQLARRIRGERA.

Residues 1–15 (MARTKQTARKSHGGK) show a composition bias toward basic residues. The interval 1–42 (MARTKQTARKSHGGKAPRTLLATKAARKSAPTTGGVKKPHRY) is disordered. Lys5 and Lys10 each carry N6,N6,N6-trimethyllysine; alternate. N6,N6-dimethyllysine; alternate occurs at positions 5 and 10. Lys5 and Lys10 each carry N6-methyllysine; alternate. Lys10 is modified (N6-acetyllysine; alternate). The residue at position 11 (Ser11) is a Phosphoserine. N6-acetyllysine is present on Lys15. Residues Lys24 and Lys28 each carry the N6-methyllysine; alternate modification. Lys24 carries the N6-acetyllysine; alternate modification. The residue at position 28 (Lys28) is an N6,N6,N6-trimethyllysine; alternate. Residue Lys28 is modified to N6,N6-dimethyllysine; alternate. Phosphoserine is present on Ser29. Position 37 is an N6,N6,N6-trimethyllysine; alternate (Lys37). Lys37 bears the N6,N6-dimethyllysine; alternate mark. An N6-methyllysine; alternate modification is found at Lys37.

The protein belongs to the histone H3 family. The nucleosome is a histone octamer containing two molecules each of H2A, H2B, H3 and H4 assembled in one H3-H4 heterotetramer and two H2A-H2B heterodimers. The octamer wraps approximately 147 bp of DNA. In terms of tissue distribution, expressed in roots, seedlings, leaves and open flowers.

The protein localises to the nucleus. It localises to the chromosome. Core component of nucleosome. Nucleosomes wrap and compact DNA into chromatin, limiting DNA accessibility to the cellular machineries which require DNA as a template. Histones thereby play a central role in transcription regulation, DNA repair, DNA replication and chromosomal stability. DNA accessibility is regulated via a complex set of post-translational modifications of histones, also called histone code, and nucleosome remodeling. The sequence is that of Histone H3-like 3 from Arabidopsis thaliana (Mouse-ear cress).